We begin with the raw amino-acid sequence, 768 residues long: Dual specificity calcium/calmodulin-dependent 3',5'-cyclic nucleotide phosphodiesterase 1C (768 aa).

Met-1 is subject to N-acetylmethionine. The tract at residues 183 to 206 is calmodulin-binding; the sequence is EKPRFKSIVHAVQAGIFVERMYRR. The 378-residue stretch at 211–588 folds into the PDEase domain; it reads VGLSYPPAVI…ERWRAKVPKE (378 aa). His-288 serves as the catalytic Proton donor. His-292, His-328, Asp-329, and Asp-436 together coordinate Zn(2+). Position 329 (Asp-329) interacts with Mg(2+). Disordered regions lie at residues 513–557 and 584–719; these read LIDE…INNS and KVPK…PPLR. 2 stretches are compositionally biased toward polar residues: residues 516–536 and 543–557; these read ETSQ…INSS and VKSS…INNS. The span at 584 to 614 shows a compositional bias: basic and acidic residues; sequence KVPKEEKAKKEAEEKARLAAEEKQKEMEAKS. Residues 631-641 are compositionally biased toward polar residues; that stretch reads ETKGQVNGTRT. Composition is skewed to basic and acidic residues over residues 642–659 and 665–692; these read SKGD…KAGE and DLKD…DGTK. A compositionally biased stretch (low complexity) spans 698-712; that stretch reads SPAPSTSSTSRLTLP.

Belongs to the cyclic nucleotide phosphodiesterase family. PDE1 subfamily. Homodimer. The cofactor is Zn(2+). Mg(2+) is required as a cofactor. Highly expressed in olfactory epithelium and at moderate levels, in cerebellum, as well as weakly in forebrain, testis, heart and lung. In the olfactory epithelium, expressed by sensory neurons, but not epithelial cells.

The protein resides in the lysosome. It catalyses the reaction a nucleoside 3',5'-cyclic phosphate + H2O = a nucleoside 5'-phosphate + H(+). The catalysed reaction is 3',5'-cyclic GMP + H2O = GMP + H(+). It carries out the reaction 3',5'-cyclic AMP + H2O = AMP + H(+). Type I PDE are activated by the binding of calmodulin in the presence of Ca(2+). In terms of biological role, calmodulin-dependent cyclic nucleotide phosphodiesterase with a dual specificity for the second messengers cAMP and cGMP, which are key regulators of many important physiological processes. Has a high affinity for both cAMP and cGMP. Modulates the amplitude and duration of the cAMP signal in sensory cilia in response to odorant stimulation, hence contributing to the generation of action potentials. Regulates smooth muscle cell proliferation. Regulates the stability of growth factor receptors, including PDGFRB. The sequence is that of Dual specificity calcium/calmodulin-dependent 3',5'-cyclic nucleotide phosphodiesterase 1C from Rattus norvegicus (Rat).